The chain runs to 294 residues: uncharacterized protein (294 aa).

Positions 1-215 (MTTAITPDKK…DQDDDDQKDL (215 aa)) are disordered. Basic residues-rich tracts occupy residues 27–43 (TKPR…KSKK) and 50–78 (AKKR…KKAP). A compositionally biased stretch (low complexity) spans 79–88 (MKAPSKPAAK). Residues 92-102 (QQAQASLQKPI) show a composition bias toward polar residues. Over residues 118 to 136 (PRPPTPIPPTGVKPEPAPR) the composition is skewed to pro residues. Low complexity predominate over residues 145 to 160 (SVSSTTPRTSATTGTT).

This is an uncharacterized protein from Caenorhabditis elegans.